The primary structure comprises 289 residues: ATP synthase subunit a (289 aa).

6 helical membrane-spanning segments follow: residues 43-63, 101-121, 160-180, 193-213, 232-252, and 259-279; these read AFHV…VLIF, SAVI…MNAV, LSVF…GGFI, LFVQ…TLIA, VFIL…GLGV, and AVFH…LTIV.

This sequence belongs to the ATPase A chain family. In terms of assembly, F-type ATPases have 2 components, CF(1) - the catalytic core - and CF(0) - the membrane proton channel. CF(1) has five subunits: alpha(3), beta(3), gamma(1), delta(1), epsilon(1). CF(0) has three main subunits: a(1), b(2) and c(9-12). The alpha and beta chains form an alternating ring which encloses part of the gamma chain. CF(1) is attached to CF(0) by a central stalk formed by the gamma and epsilon chains, while a peripheral stalk is formed by the delta and b chains.

It localises to the cell inner membrane. Its function is as follows. Key component of the proton channel; it plays a direct role in the translocation of protons across the membrane. The protein is ATP synthase subunit a of Pseudomonas savastanoi pv. phaseolicola (strain 1448A / Race 6) (Pseudomonas syringae pv. phaseolicola (strain 1448A / Race 6)).